Reading from the N-terminus, the 353-residue chain is Protein RecA (353 aa).

74-81 (GPESSGKT) serves as a coordination point for ATP.

This sequence belongs to the RecA family.

It is found in the cytoplasm. Can catalyze the hydrolysis of ATP in the presence of single-stranded DNA, the ATP-dependent uptake of single-stranded DNA by duplex DNA, and the ATP-dependent hybridization of homologous single-stranded DNAs. It interacts with LexA causing its activation and leading to its autocatalytic cleavage. The sequence is that of Protein RecA from Bordetella bronchiseptica (strain ATCC BAA-588 / NCTC 13252 / RB50) (Alcaligenes bronchisepticus).